A 313-amino-acid polypeptide reads, in one-letter code: Dimethyladenosine transferase (313 aa).

6 residues coordinate S-adenosyl-L-methionine: histidine 37, leucine 39, glycine 64, glutamate 85, aspartate 113, and asparagine 128.

The protein belongs to the class I-like SAM-binding methyltransferase superfamily. rRNA adenine N(6)-methyltransferase family. In terms of assembly, part of the small subunit (SSU) processome, composed of more than 70 proteins and the RNA chaperone small nucleolar RNA (snoRNA) U3.

It localises to the nucleus. Its subcellular location is the nucleoplasm. The protein resides in the nucleolus. The enzyme catalyses adenosine(1779)/adenosine(1780) in 18S rRNA + 4 S-adenosyl-L-methionine = N(6)-dimethyladenosine(1779)/N(6)-dimethyladenosine(1780) in 18S rRNA + 4 S-adenosyl-L-homocysteine + 4 H(+). Its function is as follows. Specifically dimethylates two adjacent adenosines in the loop of a conserved hairpin near the 3'-end of 18S rRNA in the 40S particle. Involved in the pre-rRNA processing steps leading to small-subunit rRNA production independently of its RNA-modifying catalytic activity. Part of the small subunit (SSU) processome, first precursor of the small eukaryotic ribosomal subunit. During the assembly of the SSU processome in the nucleolus, many ribosome biogenesis factors, an RNA chaperone and ribosomal proteins associate with the nascent pre-rRNA and work in concert to generate RNA folding, modifications, rearrangements and cleavage as well as targeted degradation of pre-ribosomal RNA by the RNA exosome. This is Dimethyladenosine transferase (Dimt1) from Mus musculus (Mouse).